The following is a 303-amino-acid chain: Glyceraldehyde-3-phosphate dehydrogenase (303 aa).

Residues 6 to 7 (RI), D28, R72, and T114 each bind NAD(+). D-glyceraldehyde 3-phosphate is bound by residues 143-145 (SCT), T174, 203-204 (TG), and R226. Catalysis depends on C144, which acts as the Nucleophile.

It belongs to the glyceraldehyde-3-phosphate dehydrogenase family. Homotetramer.

Its subcellular location is the cytoplasm. The enzyme catalyses D-glyceraldehyde 3-phosphate + phosphate + NAD(+) = (2R)-3-phospho-glyceroyl phosphate + NADH + H(+). The protein operates within carbohydrate degradation; glycolysis; pyruvate from D-glyceraldehyde 3-phosphate: step 1/5. Catalyzes the oxidative phosphorylation of glyceraldehyde 3-phosphate (G3P) to 1,3-bisphosphoglycerate (BPG) using the cofactor NAD. The first reaction step involves the formation of a hemiacetal intermediate between G3P and a cysteine residue, and this hemiacetal intermediate is then oxidized to a thioester, with concomitant reduction of NAD to NADH. The reduced NADH is then exchanged with the second NAD, and the thioester is attacked by a nucleophilic inorganic phosphate to produce BPG. The polypeptide is Glyceraldehyde-3-phosphate dehydrogenase (gap) (Klebsiella pneumoniae).